We begin with the raw amino-acid sequence, 312 residues long: Acetyl-coenzyme A carboxylase carboxyl transferase subunit alpha (312 aa).

Residues 36–286 (ELEKEIEKTF…KTYFLESVKA (251 aa)) form the CoA carboxyltransferase C-terminal domain.

The protein belongs to the AccA family. Acetyl-CoA carboxylase is a heterohexamer composed of biotin carboxyl carrier protein (AccB), biotin carboxylase (AccC) and two subunits each of ACCase subunit alpha (AccA) and ACCase subunit beta (AccD).

Its subcellular location is the cytoplasm. The enzyme catalyses N(6)-carboxybiotinyl-L-lysyl-[protein] + acetyl-CoA = N(6)-biotinyl-L-lysyl-[protein] + malonyl-CoA. It functions in the pathway lipid metabolism; malonyl-CoA biosynthesis; malonyl-CoA from acetyl-CoA: step 1/1. In terms of biological role, component of the acetyl coenzyme A carboxylase (ACC) complex. First, biotin carboxylase catalyzes the carboxylation of biotin on its carrier protein (BCCP) and then the CO(2) group is transferred by the carboxyltransferase to acetyl-CoA to form malonyl-CoA. This chain is Acetyl-coenzyme A carboxylase carboxyl transferase subunit alpha, found in Sulfurovum sp. (strain NBC37-1).